The chain runs to 267 residues: Pyridoxine/pyridoxamine 5'-phosphate oxidase (267 aa).

Substrate-binding positions include 20–23 (RQGY) and Lys80. FMN is bound by residues 75 to 80 (RTVLLK), 90 to 91 (YT), Arg96, Lys97, and Gln119. 3 residues coordinate substrate: Tyr137, Arg141, and Ser145. FMN-binding positions include 154–155 (QS) and Trp200. Substrate is bound at residue 206 to 208 (RLH). Arg210 is a binding site for FMN.

The protein belongs to the pyridoxamine 5'-phosphate oxidase family. Homodimer. FMN serves as cofactor.

The enzyme catalyses pyridoxamine 5'-phosphate + O2 + H2O = pyridoxal 5'-phosphate + H2O2 + NH4(+). It catalyses the reaction pyridoxine 5'-phosphate + O2 = pyridoxal 5'-phosphate + H2O2. Its pathway is cofactor metabolism; pyridoxal 5'-phosphate salvage; pyridoxal 5'-phosphate from pyridoxamine 5'-phosphate: step 1/1. The protein operates within cofactor metabolism; pyridoxal 5'-phosphate salvage; pyridoxal 5'-phosphate from pyridoxine 5'-phosphate: step 1/1. Functionally, catalyzes the oxidation of either pyridoxine 5'-phosphate (PNP) or pyridoxamine 5'-phosphate (PMP) into pyridoxal 5'-phosphate (PLP). The chain is Pyridoxine/pyridoxamine 5'-phosphate oxidase from Frankia casuarinae (strain DSM 45818 / CECT 9043 / HFP020203 / CcI3).